A 244-amino-acid chain; its full sequence is UPF0280 protein Mhun_0136 (244 aa).

The protein belongs to the UPF0280 family.

The protein is UPF0280 protein Mhun_0136 of Methanospirillum hungatei JF-1 (strain ATCC 27890 / DSM 864 / NBRC 100397 / JF-1).